The sequence spans 142 residues: Galactose-6-phosphate isomerase subunit LacA (142 aa).

It belongs to the LacAB/RpiB family. In terms of assembly, heteromultimeric protein consisting of LacA and LacB.

The enzyme catalyses aldehydo-D-galactose 6-phosphate = keto-D-tagatose 6-phosphate. It functions in the pathway carbohydrate metabolism; D-galactose 6-phosphate degradation; D-tagatose 6-phosphate from D-galactose 6-phosphate: step 1/1. This is Galactose-6-phosphate isomerase subunit LacA from Staphylococcus haemolyticus (strain JCSC1435).